Here is a 64-residue protein sequence, read N- to C-terminus: Large ribosomal subunit protein bL33c (64 aa).

The protein belongs to the bacterial ribosomal protein bL33 family.

The protein resides in the plastid. The protein localises to the chloroplast. This is Large ribosomal subunit protein bL33c from Phaeodactylum tricornutum (strain CCAP 1055/1).